A 191-amino-acid chain; its full sequence is Molybdenum cofactor guanylyltransferase (191 aa).

GTP is bound by residues 13-15 (LAG), K26, D72, and D102. A Mg(2+)-binding site is contributed by D102.

Belongs to the MobA family. As to quaternary structure, monomer. Mg(2+) serves as cofactor.

It is found in the cytoplasm. It carries out the reaction Mo-molybdopterin + GTP + H(+) = Mo-molybdopterin guanine dinucleotide + diphosphate. Transfers a GMP moiety from GTP to Mo-molybdopterin (Mo-MPT) cofactor (Moco or molybdenum cofactor) to form Mo-molybdopterin guanine dinucleotide (Mo-MGD) cofactor. This is Molybdenum cofactor guanylyltransferase from Pseudomonas putida (strain ATCC 47054 / DSM 6125 / CFBP 8728 / NCIMB 11950 / KT2440).